Reading from the N-terminus, the 363-residue chain is Cytoskeleton protein RodZ (363 aa).

Residues 1–111 lie on the Cytoplasmic side of the membrane; that stretch reads MNTEASQDQT…LGKKHKKRDG (111 aa). The 61-residue stretch at 19-79 folds into the HTH cro/C1-type domain; it reads LRQARESLGL…KLVHLPEDEL (61 aa). A DNA-binding region (H-T-H motif) is located at residues 30–49; that stretch reads QQTVAERLCLKVSTIRDIEE. Residues 112–132 traverse the membrane as a helical; Signal-anchor for type II membrane protein segment; sequence WLMSFTWLIVLVVLGLTGAWW. Over 133-363 the chain is Periplasmic; it reads WQNHQAQQAE…RVARLTVGVE (231 aa). The interval 151 to 277 is disordered; the sequence is SAQLSQNGGQ…PLPTADAGVS (127 aa). The span at 188-199 shows a compositional bias: polar residues; sequence PLTNHSVSAITN. The segment covering 200 to 225 has biased composition (low complexity); the sequence is SAPTTSSVPTTSSATTSSVPTTSSVP. Polar residues predominate over residues 226–243; the sequence is KINSTEPVDTANTNTTMH. A compositionally biased stretch (low complexity) spans 247-259; the sequence is AASAAVSPSQVPQ.

This sequence belongs to the RodZ family.

The protein resides in the cell inner membrane. Cytoskeletal protein that is involved in cell-shape control through regulation of the length of the long axis. This is Cytoskeleton protein RodZ from Yersinia pseudotuberculosis serotype O:1b (strain IP 31758).